A 267-amino-acid chain; its full sequence is DCN1-like protein 2 (267 aa).

Residues 1 to 48 form a disordered region; the sequence is MTRKYTKKSSGSTASTTNSTAEIVDLTTSTSSVGKKRKSPDEKAQPIT. The segment covering 8 to 21 has biased composition (low complexity); the sequence is KSSGSTASTTNSTA. The 188-residue stretch at 75 to 262 folds into the DCUN1 domain; it reads HYTYLYTYIF…LLDQFSEWVQ (188 aa).

In Dictyostelium discoideum (Social amoeba), this protein is DCN1-like protein 2.